The following is a 353-amino-acid chain: Peroxisome assembly protein 12-A (353 aa).

Residues 1 to 19 lie on the Peroxisomal matrix side of the membrane; it reads MAERGAHITTTSASDDRPS. The helical transmembrane segment at 20-47 threads the bilayer; sequence IFEVVAQESLMAAARPALHHIVKVLAES. At 48–51 the chain is on the cytoplasmic side; sequence NPSR. A helical membrane pass occupies residues 52–76; it reads YGTLWRWFDELYTLLDWLLQQHYLS. At 77–104 the chain is on the peroxisomal matrix side; sequence WASASFSENFYGLKRITLGKEVGQRNLP. A helical membrane pass occupies residues 105-134; it reads RKEYWKSLLLLVLIPYLRVKLEKIVNRLRE. Topologically, residues 135–139 are cytoplasmic; the sequence is EQDYS. Residues 140–178 form a helical membrane-spanning segment; sequence IQNPTSFHKRCYKAILASYPFVKLGWEAWFLFYQLRYIL. The Peroxisomal matrix segment spans residues 179–243; sequence WNGKNHSPLL…LGAVALSVSS (65 aa). Residues 244-271 form a helical membrane-spanning segment; it reads SLSLGVFFLQFLDWWYSAENQETLKSLN. Residues 272 to 353 are Cytoplasmic-facing; that stretch reads NLPVPPPPIH…HLIKLYTPDG (82 aa). Residues Cys-298, Cys-301, Cys-319, and Cys-322 each contribute to the Zn(2+) site. The RING-type; degenerate zinc finger occupies 298 to 337; that stretch reads CPLCRKVRVNDTALGTSGYVFCYRCAYYYVKTHQRCPVSG.

It belongs to the pex2/pex10/pex12 family. Component of the PEX2-PEX10-PEX12 retrotranslocation channel.

The protein resides in the peroxisome membrane. The protein operates within protein modification; protein ubiquitination. In terms of biological role, component of a retrotranslocation channel required for peroxisome organization by mediating export of the PEX5 receptor from peroxisomes to the cytosol, thereby promoting PEX5 recycling. The retrotranslocation channel is composed of PEX2, PEX10 and PEX12; each subunit contributing transmembrane segments that coassemble into an open channel that specifically allows the passage of PEX5 through the peroxisomal membrane. PEX12 also regulates PEX5 recycling by activating the E3 ubiquitin-protein ligase activity of PEX10. When PEX5 recycling is compromised, PEX12 stimulates PEX10-mediated polyubiquitination of PEX5, leading to its subsequent degradation. The sequence is that of Peroxisome assembly protein 12-A from Xenopus laevis (African clawed frog).